The following is a 221-amino-acid chain: Imidazoleglycerol-phosphate dehydratase (221 aa).

The protein belongs to the imidazoleglycerol-phosphate dehydratase family.

It carries out the reaction D-erythro-1-(imidazol-4-yl)glycerol 3-phosphate = 3-(imidazol-4-yl)-2-oxopropyl phosphate + H2O. It functions in the pathway amino-acid biosynthesis; L-histidine biosynthesis; L-histidine from 5-phospho-alpha-D-ribose 1-diphosphate: step 6/9. This is Imidazoleglycerol-phosphate dehydratase (HIS3) from Kluyveromyces lactis (strain ATCC 8585 / CBS 2359 / DSM 70799 / NBRC 1267 / NRRL Y-1140 / WM37) (Yeast).